Reading from the N-terminus, the 342-residue chain is Heparan sulfate glucosamine 3-O-sulfotransferase 6 (342 aa).

Topologically, residues 1–31 (MAGSGGLGGGAGDLQGAGTGQGTALRALRAP) are cytoplasmic. The helical; Signal-anchor for type II membrane protein transmembrane segment at 32 to 49 (LALVVLLLSAYCLFALPG) threads the bilayer. Residues 50-342 (RCPPAARAPA…QMTGQDFGWD (293 aa)) lie on the Lumenal side of the membrane. Residues 56 to 75 (RAPAPVPAPAEPPHTSLRLR) are disordered. 100 to 104 (KGGTR) provides a ligand contact to 3'-phosphoadenylyl sulfate. Residues 122–128 (EPHFFDR) and 153–156 (KTPS) contribute to the substrate site. Residues Arg-181 and Ser-189 each coordinate 3'-phosphoadenylyl sulfate. A substrate-binding site is contributed by 220 to 221 (WS). An N-linked (GlcNAc...) asparagine glycan is attached at Asn-281. Residues Cys-288 and Cys-300 are joined by a disulfide bond. 305 to 309 (KGRPH) serves as a coordination point for 3'-phosphoadenylyl sulfate.

The protein belongs to the sulfotransferase 1 family. In terms of tissue distribution, expressed in liver and kidney, followed by heart, brain, lung and testis.

It localises to the golgi apparatus membrane. The catalysed reaction is alpha-D-glucosaminyl-[heparan sulfate](n) + 3'-phosphoadenylyl sulfate = 3-sulfo-alpha-D-glucosaminyl-[heparan sulfate](n) + adenosine 3',5'-bisphosphate + H(+). Its function is as follows. Sulfotransferase that utilizes 3'-phospho-5'-adenylyl sulfate (PAPS) to catalyze the transfer of a sulfo group to heparan sulfate. Unlike 3-OST-1, does not convert non-anticoagulant heparan sulfate to anticoagulant heparan sulfate. The polypeptide is Heparan sulfate glucosamine 3-O-sulfotransferase 6 (Hs3st6) (Mus musculus (Mouse)).